The sequence spans 264 residues: MAERRTRSGGAAQRSGPRTSLTKPSKSSKRKSGSDLPNSFSEIWPRTTPAVPVRKAIVLKKIVAHAVEVPDVHTVRRSPRISFILEKENNPPLKVPTKEDLFKTCSVPGTPSSTPVLYTQNVEPDSGEAELDSRDLEMSQKVRRSYSRLQSLGCASTSTPGRRSFFGFEGPDDLPGVSPVVCSKLIETPKVPAKDLVPARTKDLVPDSTKDLVPARTLPGISPPVVKEKRKKKVPEILKSELDKWAVAMNAEFEAAEQFELLIE.

Residues 1–45 (MAERRTRSGGAAQRSGPRTSLTKPSKSSKRKSGSDLPNSFSEIWP) form a disordered region. Phosphoserine occurs at positions 20, 32, 34, 78, and 82. The KEN box motif lies at 87–89 (KEN). Residue Thr-97 is modified to Phosphothreonine. Ser-106 is subject to Phosphoserine. Phosphothreonine occurs at positions 110, 114, and 159. The FGF motif motif lies at 166-168 (FGF). Ser-222 bears the Phosphoserine mark. The tract at residues 242–264 (LDKWAVAMNAEFEAAEQFELLIE) is C-terminal Sororin domain.

The protein belongs to the sororin family. In terms of assembly, interacts with the APC/C complex. Interacts with the chromatin-bound cohesin complex; the interaction is indirect, occurs after DNA replication and requires acetylation of the cohesin component SMC3. Interacts (via the FGF motif) with PDS5A and PDS5B; the interaction is direct and prevents the interaction of PDS5A with WAPL. Phosphorylated. Phosphorylation, as cells enter mitosis, disrupts the interaction with PDS5A and relieves the inhibition of WAPL by CDCA5. In terms of processing, ubiquitinated by the APC/C complex in G1, leading to its degradation.

It is found in the nucleus. The protein resides in the chromosome. It localises to the cytoplasm. Functionally, regulator of sister chromatid cohesion in mitosis stabilizing cohesin complex association with chromatin. May antagonize the action of WAPL which stimulates cohesin dissociation from chromatin. Cohesion ensures that chromosome partitioning is accurate in both meiotic and mitotic cells and plays an important role in DNA repair. Required for efficient DNA double-stranded break repair. The polypeptide is Sororin (Cdca5) (Mus musculus (Mouse)).